A 237-amino-acid polypeptide reads, in one-letter code: Ribosomal RNA small subunit methyltransferase G (237 aa).

S-adenosyl-L-methionine-binding positions include Gly-78, Phe-83, Ala-129–Glu-130, and Arg-148. The interval Lys-218–Leu-237 is disordered.

It belongs to the methyltransferase superfamily. RNA methyltransferase RsmG family.

The protein resides in the cytoplasm. Specifically methylates the N7 position of a guanine in 16S rRNA. This chain is Ribosomal RNA small subunit methyltransferase G, found in Streptococcus pneumoniae (strain ATCC BAA-255 / R6).